Reading from the N-terminus, the 929-residue chain is Valine--tRNA ligase (929 aa).

The 'HIGH' region motif lies at 40-50 (PNVTGHLHMGH). The short motif at 522–526 (KMSKS) is the 'KMSKS' region element. Lysine 525 is an ATP binding site. Residues 855-926 (LAGLIDKEAE…LEQQHAEITD (72 aa)) adopt a coiled-coil conformation.

The protein belongs to the class-I aminoacyl-tRNA synthetase family. ValS type 1 subfamily. In terms of assembly, monomer.

It localises to the cytoplasm. It carries out the reaction tRNA(Val) + L-valine + ATP = L-valyl-tRNA(Val) + AMP + diphosphate. In terms of biological role, catalyzes the attachment of valine to tRNA(Val). As ValRS can inadvertently accommodate and process structurally similar amino acids such as threonine, to avoid such errors, it has a 'posttransfer' editing activity that hydrolyzes mischarged Thr-tRNA(Val) in a tRNA-dependent manner. In Nitrosococcus oceani (strain ATCC 19707 / BCRC 17464 / JCM 30415 / NCIMB 11848 / C-107), this protein is Valine--tRNA ligase.